A 744-amino-acid polypeptide reads, in one-letter code: MSEITPEVVESHGLSSEEYDVILKALGREPNLVELGIFSVMWSEHCSYKSSRLHLKKLPTEAPWVICGPGENAGVIDIGDGHAAIFKMESHNHPSYIEPYQGAATGVGGILRDVFTMGARPVANANALRFGRPEHPKMKHLVQGVVAGIGGYGNCVGVPTVCGETNFHPAYDGNILVNAMTVGVADTDKIFYSAATGVGNPIVYVGSKTGRDGIHGATMASTDFEEDSDAKRPTVQVGDPFTEKLLIEACLELMATDAIVAIQDMGAAGLTSSSVEMATNGKTGIRLDMDKVPCREEGMTPYEMMLSESQERMLMVLKPGKEEMAAEIFKKWELDFAVIGEVTDTQRMVLEFGGEVVCDIPLGPLADEAPLYDRPTISLEEYKAWAKIAPITDAPDSADPGADLLKLMASPNLASRAWIAEQYDSQVGADTLQTGGDAGVVRVHGTKKALAISTDCTPRYCYADPYEGGKQAIAEAYRNLCAVGARPLAVTNCLNFANPQRPEIMTQLVEALRGMGDACRMLDFPIVSGNVSLYNESKATGGGSAILPTPAIGGVGIIDDYERMMTMGFKNAGDTIYLVGPEFWATPDPTRSHLGKSLWLDVVHGRDEGRTPPTDLVVERNAGKIIHELIDDGLVNAVHDVSDGGLAVALAEMALSGGTGADVEQNSEYTAAQWWFGEDQGRYVVTVPDTEALNEALSKGTENAETAQIGFRRIGTVGGDGLLGVSLADLREAHASFFREWMEV.

Residue H45 is part of the active site. The ATP site is built by Y48 and K87. Mg(2+) is bound at residue E89. Substrate-binding positions include 90-93 and R112; that span reads SHNH. H91 functions as the Proton acceptor in the catalytic mechanism. D113 is a binding site for Mg(2+). Residue Q236 participates in substrate binding. D264 contacts Mg(2+). 308–310 is a substrate binding site; that stretch reads ESQ. ATP is bound by residues N492 and G529. Position 530 (N530) interacts with Mg(2+). S532 is a binding site for substrate.

This sequence belongs to the FGAMS family. In terms of assembly, monomer. Part of the FGAM synthase complex composed of 1 PurL, 1 PurQ and 2 PurS subunits.

It is found in the cytoplasm. It catalyses the reaction N(2)-formyl-N(1)-(5-phospho-beta-D-ribosyl)glycinamide + L-glutamine + ATP + H2O = 2-formamido-N(1)-(5-O-phospho-beta-D-ribosyl)acetamidine + L-glutamate + ADP + phosphate + H(+). It participates in purine metabolism; IMP biosynthesis via de novo pathway; 5-amino-1-(5-phospho-D-ribosyl)imidazole from N(2)-formyl-N(1)-(5-phospho-D-ribosyl)glycinamide: step 1/2. Its function is as follows. Part of the phosphoribosylformylglycinamidine synthase complex involved in the purines biosynthetic pathway. Catalyzes the ATP-dependent conversion of formylglycinamide ribonucleotide (FGAR) and glutamine to yield formylglycinamidine ribonucleotide (FGAM) and glutamate. The FGAM synthase complex is composed of three subunits. PurQ produces an ammonia molecule by converting glutamine to glutamate. PurL transfers the ammonia molecule to FGAR to form FGAM in an ATP-dependent manner. PurS interacts with PurQ and PurL and is thought to assist in the transfer of the ammonia molecule from PurQ to PurL. In Erythrobacter litoralis (strain HTCC2594), this protein is Phosphoribosylformylglycinamidine synthase subunit PurL.